A 292-amino-acid polypeptide reads, in one-letter code: ATP synthase gamma chain (292 aa).

The protein belongs to the ATPase gamma chain family. In terms of assembly, F-type ATPases have 2 components, CF(1) - the catalytic core - and CF(0) - the membrane proton channel. CF(1) has five subunits: alpha(3), beta(3), gamma(1), delta(1), epsilon(1). CF(0) has three main subunits: a, b and c.

The protein localises to the cell inner membrane. Its function is as follows. Produces ATP from ADP in the presence of a proton gradient across the membrane. The gamma chain is believed to be important in regulating ATPase activity and the flow of protons through the CF(0) complex. The chain is ATP synthase gamma chain from Hydrogenobaculum sp. (strain Y04AAS1).